The primary structure comprises 284 residues: Trimeric intracellular cation channel type B (284 aa).

Residues 1–15 (MESFSELSLQFSQLS) are Lumenal-facing. The helical transmembrane segment at 16–32 (MFPFFETAHYLTSVMSA) threads the bilayer. At 33–44 (REQAGAVDVASR) the chain is on the cytoplasmic side. Residues 45–68 (SPLASWFSSMLYCFGGGILSSILL) form a helical membrane-spanning segment. At 69 to 79 (AEPPVGILSNT) the chain is on the lumenal side. The helical transmembrane segment at 80 to 99 (TSIILASAVWYMVYYFPYDL) threads the bilayer. The Cytoplasmic portion of the chain corresponds to 100–102 (FYN). The helical transmembrane segment at 103-121 (CFFFLPIRLILAGMKEVTR) threads the bilayer. Lysine 117 and arginine 121 together coordinate a 1,2-diacyl-sn-glycero-3-phospho-(1D-myo-inositol-4,5-bisphosphate). Over 122-139 (TWKILSGVAHAHSHYKDA) the chain is Lumenal. Residues 140–157 (MLVMITIGWARGAGGGLI) form a helical membrane-spanning segment. At 158-178 (SNFEQLVRGVWKPESNEFLKM) the chain is on the cytoplasmic side. Residues 179–196 (SYPVKVTLIGAVLFTLQH) form a helical membrane-spanning segment. Topologically, residues 197 to 204 (GQYLPISR) are lumenal. Residues 205–225 (HNLMFIYTLFLILIKVTMMLT) form a helical membrane-spanning segment. Residues 226–284 (RSTASPFLPLETSLQHILFSRQQIPAEVRESPSSSGDKGKPSKKTLDKDSGEQDNKKDN) are Cytoplasmic-facing. Residues 250–284 (PAEVRESPSSSGDKGKPSKKTLDKDSGEQDNKKDN) are disordered. The segment covering 262-284 (DKGKPSKKTLDKDSGEQDNKKDN) has biased composition (basic and acidic residues).

The protein belongs to the TMEM38 family. In terms of assembly, homotrimer; conformation seems to be controled by binding to diacylglycerol (DAG).

It localises to the endoplasmic reticulum membrane. The catalysed reaction is K(+)(in) = K(+)(out). Its activity is regulated as follows. Channel activity is activated by increased cytosolic Ca(2+) levels and blocked by luminal high Ca(2+) levels. In terms of biological role, intracellular monovalent cation channel required for maintenance of rapid intracellular calcium release. Acts as a potassium counter-ion channel that functions in synchronization with calcium release from intracellular stores. Activated by increased cytosolic Ca(2+) levels. The chain is Trimeric intracellular cation channel type B (tmem38b) from Xenopus tropicalis (Western clawed frog).